Consider the following 235-residue polypeptide: Leucyl/phenylalanyl-tRNA--protein transferase (235 aa).

This sequence belongs to the L/F-transferase family.

The protein resides in the cytoplasm. The enzyme catalyses N-terminal L-lysyl-[protein] + L-leucyl-tRNA(Leu) = N-terminal L-leucyl-L-lysyl-[protein] + tRNA(Leu) + H(+). It catalyses the reaction N-terminal L-arginyl-[protein] + L-leucyl-tRNA(Leu) = N-terminal L-leucyl-L-arginyl-[protein] + tRNA(Leu) + H(+). It carries out the reaction L-phenylalanyl-tRNA(Phe) + an N-terminal L-alpha-aminoacyl-[protein] = an N-terminal L-phenylalanyl-L-alpha-aminoacyl-[protein] + tRNA(Phe). In terms of biological role, functions in the N-end rule pathway of protein degradation where it conjugates Leu, Phe and, less efficiently, Met from aminoacyl-tRNAs to the N-termini of proteins containing an N-terminal arginine or lysine. This is Leucyl/phenylalanyl-tRNA--protein transferase from Aeromonas hydrophila subsp. hydrophila (strain ATCC 7966 / DSM 30187 / BCRC 13018 / CCUG 14551 / JCM 1027 / KCTC 2358 / NCIMB 9240 / NCTC 8049).